The chain runs to 203 residues: dITP/XTP pyrophosphatase (203 aa).

8–13 contacts substrate; that stretch reads SNNAGK. 2 residues coordinate Mg(2+): Asp-40 and Asp-69. The active-site Proton acceptor is the Asp-69. Substrate contacts are provided by residues Ser-70, 152 to 155, Lys-175, and 180 to 181; these read FGYD and HR.

Belongs to the HAM1 NTPase family. In terms of assembly, homodimer. It depends on Mg(2+) as a cofactor.

It carries out the reaction XTP + H2O = XMP + diphosphate + H(+). The catalysed reaction is dITP + H2O = dIMP + diphosphate + H(+). It catalyses the reaction ITP + H2O = IMP + diphosphate + H(+). Pyrophosphatase that catalyzes the hydrolysis of nucleoside triphosphates to their monophosphate derivatives, with a high preference for the non-canonical purine nucleotides XTP (xanthosine triphosphate), dITP (deoxyinosine triphosphate) and ITP. Seems to function as a house-cleaning enzyme that removes non-canonical purine nucleotides from the nucleotide pool, thus preventing their incorporation into DNA/RNA and avoiding chromosomal lesions. The chain is dITP/XTP pyrophosphatase from Nitrosomonas europaea (strain ATCC 19718 / CIP 103999 / KCTC 2705 / NBRC 14298).